Consider the following 199-residue polypeptide: Phosphoheptose isomerase (199 aa).

One can recognise an SIS domain in the interval 36–198; sequence MSQCLLNEHK…DRKLIPSSED (163 aa). 51 to 53 lines the substrate pocket; that stretch reads NGG. The Zn(2+) site is built by His-60 and Glu-64. Substrate contacts are provided by residues Glu-64, 93–94, 119–121, Ser-124, and Gln-174; these read ND and STS. Gln-174 and His-182 together coordinate Zn(2+).

Belongs to the SIS family. GmhA subfamily. In terms of assembly, homotetramer. Zn(2+) serves as cofactor.

It localises to the cytoplasm. The catalysed reaction is 2 D-sedoheptulose 7-phosphate = D-glycero-alpha-D-manno-heptose 7-phosphate + D-glycero-beta-D-manno-heptose 7-phosphate. Its pathway is carbohydrate biosynthesis; D-glycero-D-manno-heptose 7-phosphate biosynthesis; D-glycero-alpha-D-manno-heptose 7-phosphate and D-glycero-beta-D-manno-heptose 7-phosphate from sedoheptulose 7-phosphate: step 1/1. Its function is as follows. Catalyzes the isomerization of sedoheptulose 7-phosphate in D-glycero-D-manno-heptose 7-phosphate. This chain is Phosphoheptose isomerase, found in Coxiella burnetii (strain RSA 331 / Henzerling II).